The sequence spans 279 residues: Proline-rich protein 23D1 (279 aa).

2 disordered regions span residues 1-60 (MYGY…PHLN) and 247-270 (LRPMPPSPSPGPQVYHRVHHRPPS). Residues 15–33 (TEPQNDNEGETSLATTQMN) show a composition bias toward polar residues.

The protein belongs to the PRR23 family.

This chain is Proline-rich protein 23D1 (PRR23D1), found in Homo sapiens (Human).